The sequence spans 185 residues: Large ribosomal subunit protein uL15 (185 aa).

The tract at residues 1–51 is disordered; sequence MDLSSLRPAAGAVKNKKRVGRGQGSGNGTTAGKGNKGQQARSGYQKPINEG. Residues 21–35 show a composition bias toward gly residues; sequence RGQGSGNGTTAGKGN.

The protein belongs to the universal ribosomal protein uL15 family. As to quaternary structure, part of the 50S ribosomal subunit.

Functionally, binds to the 23S rRNA. This is Large ribosomal subunit protein uL15 from Chlorobium phaeobacteroides (strain DSM 266 / SMG 266 / 2430).